The chain runs to 87 residues: Small ribosomal subunit protein bS20 (87 aa).

A disordered region spans residues 1-29; sequence MANTAQARKRARQAVKQNAHNSSQRSTLR. Polar residues predominate over residues 20-29; that stretch reads HNSSQRSTLR.

It belongs to the bacterial ribosomal protein bS20 family.

Functionally, binds directly to 16S ribosomal RNA. The polypeptide is Small ribosomal subunit protein bS20 (Janthinobacterium sp. (strain Marseille) (Minibacterium massiliensis)).